The sequence spans 418 residues: Glutamyl-tRNA reductase (418 aa).

Residues 49–52 (TCNR), Ser109, 114–116 (EPQ), and Gln120 each bind substrate. The Nucleophile role is filled by Cys50. Residue 189-194 (GAGETI) participates in NADP(+) binding.

Belongs to the glutamyl-tRNA reductase family. In terms of assembly, homodimer.

The catalysed reaction is (S)-4-amino-5-oxopentanoate + tRNA(Glu) + NADP(+) = L-glutamyl-tRNA(Glu) + NADPH + H(+). The protein operates within porphyrin-containing compound metabolism; protoporphyrin-IX biosynthesis; 5-aminolevulinate from L-glutamyl-tRNA(Glu): step 1/2. In terms of biological role, catalyzes the NADPH-dependent reduction of glutamyl-tRNA(Glu) to glutamate 1-semialdehyde (GSA). This is Glutamyl-tRNA reductase from Klebsiella pneumoniae (strain 342).